The following is a 128-amino-acid chain: Holo-[acyl-carrier-protein] synthase (128 aa).

Mg(2+) is bound by residues Asp8 and Glu58.

This sequence belongs to the P-Pant transferase superfamily. AcpS family. Mg(2+) is required as a cofactor.

It is found in the cytoplasm. The catalysed reaction is apo-[ACP] + CoA = holo-[ACP] + adenosine 3',5'-bisphosphate + H(+). Functionally, transfers the 4'-phosphopantetheine moiety from coenzyme A to a Ser of acyl-carrier-protein. The polypeptide is Holo-[acyl-carrier-protein] synthase (Alkalilimnicola ehrlichii (strain ATCC BAA-1101 / DSM 17681 / MLHE-1)).